Here is a 188-residue protein sequence, read N- to C-terminus: ATP synthase subunit delta (188 aa).

Belongs to the ATPase delta chain family. In terms of assembly, F-type ATPases have 2 components, F(1) - the catalytic core - and F(0) - the membrane proton channel. F(1) has five subunits: alpha(3), beta(3), gamma(1), delta(1), epsilon(1). F(0) has three main subunits: a(1), b(2) and c(10-14). The alpha and beta chains form an alternating ring which encloses part of the gamma chain. F(1) is attached to F(0) by a central stalk formed by the gamma and epsilon chains, while a peripheral stalk is formed by the delta and b chains.

Its subcellular location is the cell inner membrane. F(1)F(0) ATP synthase produces ATP from ADP in the presence of a proton or sodium gradient. F-type ATPases consist of two structural domains, F(1) containing the extramembraneous catalytic core and F(0) containing the membrane proton channel, linked together by a central stalk and a peripheral stalk. During catalysis, ATP synthesis in the catalytic domain of F(1) is coupled via a rotary mechanism of the central stalk subunits to proton translocation. Functionally, this protein is part of the stalk that links CF(0) to CF(1). It either transmits conformational changes from CF(0) to CF(1) or is implicated in proton conduction. The chain is ATP synthase subunit delta from Paracoccus denitrificans (strain Pd 1222).